Here is a 352-residue protein sequence, read N- to C-terminus: Endoplasmic reticulum GDP-fucose transporter (352 aa).

10 consecutive transmembrane segments (helical) span residues 9-29 (LGMLFVFIGCCSNVVFLELII), 34-54 (GAGNLITFAQFLFIALEGLVF), 70-90 (YVILVALFFGANVCNNYAFNF), 96-116 (LHMIFRSGSLMANMIMGIVLL), 126-146 (SSVAMITAGIILCTLVSSGDV), 163-183 (FFWWTVGIGLLTIALLVTAYM), 201-221 (ALFFTHMLPLPGFLIMAGNIV), 249-271 (LMLFYLLCNVVTQYVCISAVYVL), 276-298 (ASLTVTLVVTLRKFVSLLFSIIY), and 305-325 (LNHWVGTILVFFGTILFANVI). A Prevents secretion from ER motif is present at residues 350-352 (KVE).

This sequence belongs to the nucleotide-sugar transporter family. SLC35B subfamily.

It localises to the endoplasmic reticulum membrane. Sugar transporter that specifically mediates the transport of UDP-N-acetylglucosamine (UDP-GlcNAc), GDP-fucose and UDP-xylose. Functions redundantly with Gfr in the O-fucosylation of Notch, positively regulating Notch signaling. Involved in the biosynthesis of heparan sulfate-glycosaminoglycan (HS-GAG) and in Dpp signaling in the wing imaginal disk. In Drosophila melanogaster (Fruit fly), this protein is Endoplasmic reticulum GDP-fucose transporter.